The primary structure comprises 256 residues: MSETIKDIKSKLQHMLSISELERSEYNNDARKGVQNAMIQRRKQLEKEQVLLDNYVKMTEFENSILAENPDALICGIDEVGRGPLAGPVVTCAVILNKNHHFTGLNDSKKLSAKQRHSIESKLLNDVYAYAYGYASVEEIDEINIYEATKLAMHRAIEGLRIKPTHLLVDAMTLDIDIPQTSLIKGDAKSVSIAAASVLAKEHRDQYMRDLGRKYPGYSFENNVGYGTQQHLDGIKKYGILNEHRKTFEPIKSLVN.

In terms of domain architecture, RNase H type-2 spans 72 to 256 (ALICGIDEVG…TFEPIKSLVN (185 aa)). Asp-78, Glu-79, and Asp-170 together coordinate a divalent metal cation.

This sequence belongs to the RNase HII family. Mn(2+) serves as cofactor. The cofactor is Mg(2+).

The protein resides in the cytoplasm. It carries out the reaction Endonucleolytic cleavage to 5'-phosphomonoester.. Endonuclease that specifically degrades the RNA of RNA-DNA hybrids. The chain is Ribonuclease HII from Staphylococcus saprophyticus subsp. saprophyticus (strain ATCC 15305 / DSM 20229 / NCIMB 8711 / NCTC 7292 / S-41).